Here is a 216-residue protein sequence, read N- to C-terminus: MGTRDDEYDYLFKVVLIGDSGVGKSNLLSRFTRNEFNLESKSTIGVEFATRSIQVDGKTIKAQIWDTAGQERYRAITSAYYRGAVGALLVYDIAKHLTYENVERWLKELRDHADSNIVIMLVGNKSDLRHLRAVPTDEARAFAEKNGLSFIETSALDYTNVEAAFQTILTEIYRIVSQKQMSDRRENDMSPSNNVVPIHVPPTTENKPKVQCCQNI.

An N-acetylglycine modification is found at Gly2. Ser20, Gly21, Val22, Gly23, Lys24, Ser25, Asn26, Asn37, Leu38, Ser40, Ser42, and Thr43 together coordinate GTP. Ser25 provides a ligand contact to Mg(2+). The Switch 1 signature appears at Phe36–Glu47. Thr43 and Asp66 together coordinate Mg(2+). The short motif at Thr67–Gly86 is the Switch 2 element. GTP contacts are provided by Gly69, Asn124, Lys125, Asp127, Ala155, and Leu156. The disordered stretch occupies residues Asp183–Lys207. S-geranylgeranyl cysteine attachment occurs at residues Cys212 and Cys213. The residue at position 213 (Cys213) is a Cysteine methyl ester. Positions Gln214 to Ile216 are cleaved as a propeptide — removed in mature form.

Belongs to the small GTPase superfamily. Rab family. As to quaternary structure, interacts (GTP-bound form) with RAB11FIPs (via their C-termini) including RAB11FIP1, RAB11FIP2, RAB11FIP3, RAB11FIP4 and RAB11FIP5 effectors. Forms a complex with RAB11FIP3 and dynein intermediate chain DYNC1LI1; the interaction between RAB11A1 and RAB11FIP3 is direct; the complex regulates endocytic trafficking. Interacts with EVI5; EVI5 and RAB11FIP3 may be mutually exclusive and compete for binding RAB11A. Interacts with SGSM1, SGSM2, SGSM3 and VIPAS39. Interacts with EXOC6 in a GTP-dependent manner. Interacts with RAB11FIP5. Interacts with STXBP6. Interacts (GDP-bound form) with ZFYVE27. Interacts with BIRC6/bruce. May interact with TBC1D14. Interacts with UNC119; in a cell cycle-dependent manner. GDP-bound and nucleotide-free forms interact with SH3BP5. Interacts (GDP-bound form) with KIF5A in a ZFYVE27-dependent manner. Interacts (GDP-bound form) with RELCH. Found in a complex composed of RELCH, OSBP1 and RAB11A. Interacts with TBC1D12. Interacts with DEF6. Interacts with ATP9A. Forms a heterotetramer with RAB11FIP3; the GTP-bound form is preferred for binding. Forms a complex with Rabin8/RAB3IP and RAB11FIP3, probably a heterohexamer with two of each protein subunit, where Rabin8/RAB3IP and RAB11FIP3 simultaneously bind to RAB11A; the complex promotes preciliary trafficking and cilia growth. Forms a complex containing RAB11A, ASAP1, Rabin8/RAB3IP, RAP11FIP3 and ARF4; the complex promotes preciliary trafficking; the complex binds to RHO in photoreceptor cells and promotes RHO ciliary transport. Interacts (GTP-bound form) with WDR44; the interaction prevents RAB11A-RAB3IP-RAB11FIP3 complex formation. Requires Mg(2+) as cofactor.

It is found in the cell membrane. It localises to the endosome membrane. The protein localises to the recycling endosome membrane. Its subcellular location is the cleavage furrow. The protein resides in the cytoplasmic vesicle. It is found in the phagosome. It localises to the cytoplasmic vesicle membrane. The protein localises to the golgi apparatus. Its subcellular location is the trans-Golgi network. The enzyme catalyses GTP + H2O = GDP + phosphate + H(+). Its activity is regulated as follows. Regulated by guanine nucleotide exchange factors (GEFs) which promote the exchange of bound GDP for free GTP. Regulated by GTPase activating proteins (GAPs) which increase the GTP hydrolysis activity. Inhibited by GDP dissociation inhibitors (GDIs) which prevent Rab-GDP dissociation. Its function is as follows. The small GTPases Rab are key regulators of intracellular membrane trafficking, from the formation of transport vesicles to their fusion with membranes. Rabs cycle between an inactive GDP-bound form and an active GTP-bound form that is able to recruit to membranes different set of downstream effectors directly responsible for vesicle formation, movement, tethering and fusion. The small Rab GTPase RAB11A regulates endocytic recycling. Forms a functional Rab11/RAB11FIP3/dynein complex that regulates the movement of peripheral sorting endosomes (SE) along microtubule tracks toward the microtubule organizing center/centrosome, generating the endosomal recycling compartment (ERC). Acts as a major regulator of membrane delivery during cytokinesis. Together with MYO5B and RAB8A participates in epithelial cell polarization. Together with Rabin8/RAB3IP, RAB8A, the exocyst complex, PARD3, PRKCI, ANXA2, CDC42 and DNMBP promotes transcytosis of PODXL to the apical membrane initiation sites (AMIS), apical surface formation and lumenogenesis. Together with MYO5B participates in CFTR trafficking to the plasma membrane and TF (Transferrin) recycling in nonpolarized cells. Required in a complex with MYO5B and RAB11FIP2 for the transport of NPC1L1 to the plasma membrane. Participates in the sorting and basolateral transport of CDH1 from the Golgi apparatus to the plasma membrane. Regulates the recycling of FCGRT (receptor of Fc region of monomeric IgG) to basolateral membranes. May also play a role in melanosome transport and release from melanocytes. Promotes Rabin8/RAB3IP preciliary vesicular trafficking to mother centriole by forming a ciliary targeting complex containing Rab11, ASAP1, Rabin8/RAB3IP, RAB11FIP3 and ARF4, thereby regulating ciliogenesis initiation. On the contrary, upon LPAR1 receptor signaling pathway activation, interaction with phosphorylated WDR44 prevents Rab11-RAB3IP-RAB11FIP3 complex formation and cilia growth. Participates in the export of a subset of neosynthesized proteins through a Rab8-Rab10-Rab11-endososomal dependent export route via interaction with WDR44. This is Ras-related protein Rab-11A from Bos taurus (Bovine).